The chain runs to 428 residues: Dihydroorotase (428 aa).

Histidine 61 and histidine 63 together coordinate Zn(2+). Residues 63–65 (HLR) and asparagine 95 contribute to the substrate site. Residues aspartate 153, histidine 180, and histidine 233 each coordinate Zn(2+). Residue asparagine 279 coordinates substrate. Residue aspartate 306 participates in Zn(2+) binding. Aspartate 306 is an active-site residue. Substrate is bound by residues histidine 310 and 324–325 (FG).

This sequence belongs to the metallo-dependent hydrolases superfamily. DHOase family. Class I DHOase subfamily. Requires Zn(2+) as cofactor.

The enzyme catalyses (S)-dihydroorotate + H2O = N-carbamoyl-L-aspartate + H(+). The protein operates within pyrimidine metabolism; UMP biosynthesis via de novo pathway; (S)-dihydroorotate from bicarbonate: step 3/3. In terms of biological role, catalyzes the reversible cyclization of carbamoyl aspartate to dihydroorotate. This is Dihydroorotase from Geobacillus thermodenitrificans (strain NG80-2).